The sequence spans 549 residues: Chaperonin GroEL (549 aa).

ATP is bound by residues 30-33 (TLGP), Lys51, 87-91 (DGTTT), Gly415, and Asp495.

The protein belongs to the chaperonin (HSP60) family. Forms a cylinder of 14 subunits composed of two heptameric rings stacked back-to-back. Interacts with the co-chaperonin GroES.

Its subcellular location is the cytoplasm. The catalysed reaction is ATP + H2O + a folded polypeptide = ADP + phosphate + an unfolded polypeptide.. In terms of biological role, together with its co-chaperonin GroES, plays an essential role in assisting protein folding. The GroEL-GroES system forms a nano-cage that allows encapsulation of the non-native substrate proteins and provides a physical environment optimized to promote and accelerate protein folding. In Hahella chejuensis (strain KCTC 2396), this protein is Chaperonin GroEL.